A 2090-amino-acid polypeptide reads, in one-letter code: Non-reducing polyketide synthase rdc1 (2090 aa).

The interval 12 to 250 (FLVGDQVDSW…NPLNIHALQH (239 aa)) is N-terminal acylcarrier protein transacylase (SAT) domain. The Ketosynthase family 3 (KS3) domain maps to 375–808 (TGRIAIVGMS…GGNACLLLED (434 aa)). Residues C551, H686, and H726 each act as for beta-ketoacyl synthase activity in the active site. Residues 912-1195 (IFVFSGQGSH…NQVCTQFVRA (284 aa)) form a malonyl-CoA:ACP transacylase (MAT) domain region. Catalysis depends on S1003, which acts as the For acyl/malonyl transferase activity. The segment at 1293 to 1433 (QHVAKESSSN…LVVQKNVKAL (141 aa)) is N-terminal hotdog fold. Residues 1293-1607 (QHVAKESSSN…FVRISNALLQ (315 aa)) form the PKS/mFAS DH domain. The segment at 1304-1604 (GKLEITFRAS…NLSFVRISNA (301 aa)) is product template (PT) domain. Residues 1459-1607 (QGHWLKHDIF…FVRISNALLQ (149 aa)) form a C-terminal hotdog fold region. The segment at 1615–1650 (SKPVGRGMAKQEKQEVPATTEVVRQPEKEESRHSVD) is disordered. A compositionally biased stretch (basic and acidic residues) spans 1638 to 1649 (RQPEKEESRHSV). The Carrier domain maps to 1649 to 1726 (VDTPSFSDVL…DIKRAFDILT (78 aa)). Residue S1686 is modified to O-(pantetheine 4'-phosphoryl)serine. The interval 1820 to 1964 (ADGTGSIATY…THQHLKALFA (145 aa)) is thioesterase (TE) domain.

Its pathway is secondary metabolite biosynthesis. Non-reducing polyketide synthase; part of the gene cluster that mediates the biosynthesis of radicicol, a resorcylic acid lactone (RAL) that irreversibly inhibits the HSP90 molecular chaperone, an important target for cancer chemotherapy. The radicicol cluster encodes only two apparent post-PKS enzymes, a cytochrome P450 monooxygenase (rdc4) and a non-heme halogenase (rdc2) that could introduce the epoxide and the chlorine, respectively. If this cluster includes all the genes required for radicicol biosynthesis, the remaining structural features of radicicol are presumably generated by the PKSs rdc1 and rdc5. The C-2' ketone could arise if the R-PKS rdc5 and NR-PKS rdc1 each carry out four iterations, in contrast to the five iteration-three iteration split for the hypothemycin PKSs. The origin of the cis 5',6' double bond is not known. The radicicol R-PKS rdc5 ER domain may catalyze either double bond isomerization or reduction in the third iteration. The chain is Non-reducing polyketide synthase rdc1 from Metacordyceps chlamydosporia (Nematophagous fungus).